We begin with the raw amino-acid sequence, 366 residues long: Aminomethyltransferase (366 aa).

The protein belongs to the GcvT family. In terms of assembly, the glycine cleavage system is composed of four proteins: P, T, L and H.

It catalyses the reaction N(6)-[(R)-S(8)-aminomethyldihydrolipoyl]-L-lysyl-[protein] + (6S)-5,6,7,8-tetrahydrofolate = N(6)-[(R)-dihydrolipoyl]-L-lysyl-[protein] + (6R)-5,10-methylene-5,6,7,8-tetrahydrofolate + NH4(+). Its function is as follows. The glycine cleavage system catalyzes the degradation of glycine. In Moorella thermoacetica (strain ATCC 39073 / JCM 9320), this protein is Aminomethyltransferase.